We begin with the raw amino-acid sequence, 240 residues long: Ribonuclease PH (240 aa).

Phosphate contacts are provided by residues R87 and 125–127 (GTR).

The protein belongs to the RNase PH family. Homohexameric ring arranged as a trimer of dimers.

The enzyme catalyses tRNA(n+1) + phosphate = tRNA(n) + a ribonucleoside 5'-diphosphate. Its function is as follows. Phosphorolytic 3'-5' exoribonuclease that plays an important role in tRNA 3'-end maturation. Removes nucleotide residues following the 3'-CCA terminus of tRNAs; can also add nucleotides to the ends of RNA molecules by using nucleoside diphosphates as substrates, but this may not be physiologically important. Probably plays a role in initiation of 16S rRNA degradation (leading to ribosome degradation) during starvation. This is Ribonuclease PH from Pseudomonas putida (strain GB-1).